We begin with the raw amino-acid sequence, 41 residues long: Large ribosomal subunit protein bL36 (41 aa).

It belongs to the bacterial ribosomal protein bL36 family.

In Brucella abortus (strain S19), this protein is Large ribosomal subunit protein bL36.